The sequence spans 831 residues: Histone acetyltransferase SAS3 (831 aa).

The MYST-type HAT domain maps to 267–573 (VWFSQIEYIV…VKYDKLLWEP (307 aa)). Residues 300–325 (VFICEFCLKYMTSRYTFYRHQLKCLT) form a C2HC MYST-type zinc finger. The residue at position 367 (Lys367) is an N6-acetyllysine; by autocatalysis. Acetyl-CoA is bound by residues 419 to 421 (ILT) and 426 to 432 (QRKGYGQ). The Proton donor/acceptor role is filled by Glu452. Residue Ser456 coordinates acetyl-CoA. 2 disordered regions span residues 614-639 (ENYNNSRAHNKRRRRRRRSSEHKTSK) and 719-813 (PLGN…SHIR). The segment covering 621–633 (AHNKRRRRRRRSS) has biased composition (basic residues). Acidic residues-rich tracts occupy residues 736 to 746 (EQDEVENDVDT) and 755 to 794 (KEDEDEDEDFTLDDDIEDEQISEENDEEEDTYEEDSDDDE). Positions 795-812 (DGKRKGQEQDENDIESHI) are enriched in basic and acidic residues.

Belongs to the MYST (SAS/MOZ) family. Component of the NuA3 histone acetyltransferase (HAT) complex. The NuA3 HAT complex has 2 functionally distinct forms that participate in transcription. The NuA3a HAT complex is composed of at least NTO1, SAS3, TAF14, YNG1 and EAF6. The NuA3b HAT complex contains an additional subunit, PDP3. SAS3 interacts with CDC68/SPT16. In terms of processing, autoacetylation at Lys-367 is required for proper function.

The protein resides in the nucleus. It carries out the reaction L-lysyl-[protein] + acetyl-CoA = N(6)-acetyl-L-lysyl-[protein] + CoA + H(+). Functionally, catalytic component of the NuA3 histone acetyltransferase complex, that acetylates H3K14. The NuA3 HAT complex has 2 functionally distinct forms. NuA3a binds H3K4me3, through the PHD finger of YNG1, and acetylates H3K14 at the promoter region of actively transcribed genes to promote transcription initiation. NuA3b binds H3K36me3 at the coding regions of actively transcribed genes, through the PWWP domain of PDP3, and coordinates transcription elongation. In vitro, SAS3 acetylates free histones H3 and H4. It is involved in silencing the HMR locus. This Saccharomyces cerevisiae (strain ATCC 204508 / S288c) (Baker's yeast) protein is Histone acetyltransferase SAS3.